Here is an 84-residue protein sequence, read N- to C-terminus: Perlustrin (84 aa).

The region spanning 1-82 (LSCASCENAA…LDFKGVCARV (82 aa)) is the IGFBP N-terminal domain. Intrachain disulfides connect C3–C28, C6–C30, C11–C31, C18–C34, C42–C55, and C49–C79.

As to expression, shell.

Functionally, binds human IGF1 and IGF2 and bovine insulin. This chain is Perlustrin, found in Haliotis laevigata (Smooth Australian abalone).